The sequence spans 401 residues: Phosphoglycerate kinase (401 aa).

Substrate contacts are provided by residues 23 to 25 (DFN), Arg-39, 62 to 65 (HLGR), Arg-121, and Arg-154. ATP contacts are provided by residues Lys-207, Gly-298, Glu-329, and 355-358 (GGDT).

The protein belongs to the phosphoglycerate kinase family. As to quaternary structure, monomer.

It is found in the cytoplasm. It carries out the reaction (2R)-3-phosphoglycerate + ATP = (2R)-3-phospho-glyceroyl phosphate + ADP. It participates in carbohydrate degradation; glycolysis; pyruvate from D-glyceraldehyde 3-phosphate: step 2/5. The sequence is that of Phosphoglycerate kinase from Campylobacter fetus subsp. fetus (strain 82-40).